The chain runs to 272 residues: Shikimate dehydrogenase (NADP(+)) (272 aa).

Shikimate is bound by residues 14–16 (SKS) and Thr-61. The Proton acceptor role is filled by Lys-65. Residue Glu-77 coordinates NADP(+). Asn-86 and Asp-102 together coordinate shikimate. Residues 126–130 (GAGGA), 149–154 (NRTVSR), and Met-213 each bind NADP(+). Tyr-215 provides a ligand contact to shikimate. Gly-237 serves as a coordination point for NADP(+).

The protein belongs to the shikimate dehydrogenase family. Homodimer.

It carries out the reaction shikimate + NADP(+) = 3-dehydroshikimate + NADPH + H(+). It functions in the pathway metabolic intermediate biosynthesis; chorismate biosynthesis; chorismate from D-erythrose 4-phosphate and phosphoenolpyruvate: step 4/7. In terms of biological role, involved in the biosynthesis of the chorismate, which leads to the biosynthesis of aromatic amino acids. Catalyzes the reversible NADPH linked reduction of 3-dehydroshikimate (DHSA) to yield shikimate (SA). The polypeptide is Shikimate dehydrogenase (NADP(+)) (Shigella flexneri).